Reading from the N-terminus, the 129-residue chain is MSYISGARSLPDEQVRIASTKMDGIGPKKAIQLRYRLGISGNIKIHELTKYQIDQIEQMIAQDHVVHWELKRGERADIERLISISRYRGIRHQDGSPLRGQRTHTNARTARKQIRKGNERRLPKEQATD.

Residues 92–129 (HQDGSPLRGQRTHTNARTARKQIRKGNERRLPKEQATD) are disordered. Residues 116 to 129 (KGNERRLPKEQATD) are compositionally biased toward basic and acidic residues.

Belongs to the universal ribosomal protein uS13 family. As to quaternary structure, part of the small ribosomal subunit.

It is found in the mitochondrion. Functionally, located at the top of the head of the small subunit, it contacts several helices of the 18S rRNA. In Zea mays (Maize), this protein is Small ribosomal subunit protein uS13m (RPS13).